The chain runs to 551 residues: RCC1 and BTB domain-containing protein 2 (551 aa).

RCC1 repeat units lie at residues 64–115 (NDEI…VLAT), 117–169 (DGEV…VLTS), 171–222 (GEVF…AVVD), 223–274 (TGEV…VLTD), 276–326 (GQIY…AAKT), and 328–382 (GGHV…TVAE). The BTB domain maps to 394-457 (ADLKFLVDGK…LYTDNISLSP (64 aa)).

In terms of tissue distribution, expressed in testis and heart (at protein level).

It is found in the cytoplasmic vesicle. Its subcellular location is the secretory vesicle. The protein localises to the acrosome. The chain is RCC1 and BTB domain-containing protein 2 (Rcbtb2) from Mus musculus (Mouse).